A 564-amino-acid chain; its full sequence is Kelch repeat and BTB domain-containing protein 1 (564 aa).

One can recognise a BTB domain in the interval 21-88 (CDINIVINDE…IYGIPLSLTN (68 aa)). Residues 123 to 219 (CIDFYIYADK…SLLSPQVIKS (97 aa)) enclose the BACK domain. Kelch repeat units follow at residues 252–297 (IELI…VLDN), 298–346 (IIYM…ADDE), 347–395 (YIYC…MLNG), 397–441 (IYVI…VHDG), and 442–492 (KIYI…STHN).

As to quaternary structure, interacts (via BTB domain) with host CUL3.

The protein localises to the host cytoplasm. Probable substrate-specific adapter of CUL3-containing E3 ubiquitin-protein ligases which mediate the ubiquitination and subsequent proteasomal degradation of host target proteins. The protein is Kelch repeat and BTB domain-containing protein 1 (KBTB1) of Bos taurus (Bovine).